We begin with the raw amino-acid sequence, 346 residues long: D-alanine--D-alanine ligase (346 aa).

Residues lysine 134–glutamine 340 enclose the ATP-grasp domain. Residue glutamate 161–phenylalanine 212 participates in ATP binding. Aspartate 284, glutamate 296, and asparagine 298 together coordinate Mg(2+).

This sequence belongs to the D-alanine--D-alanine ligase family. It depends on Mg(2+) as a cofactor. Mn(2+) serves as cofactor.

It is found in the cytoplasm. The catalysed reaction is 2 D-alanine + ATP = D-alanyl-D-alanine + ADP + phosphate + H(+). Its pathway is cell wall biogenesis; peptidoglycan biosynthesis. Its function is as follows. Cell wall formation. This Sulfurovum sp. (strain NBC37-1) protein is D-alanine--D-alanine ligase.